The following is a 434-amino-acid chain: SPARC-related modular calcium-binding protein 1 (434 aa).

Positions 1–26 are cleaved as a signal peptide; it reads MLPARCARLLTPHLLLVLVQLSPARG. The region spanning 37 to 89 is the Kazal-like domain; it reads SDRDPQCNLHCSRTQPKPICASDGRSYESMCEYQRAKCRDPTLGVVHRGRCKD. 6 cysteine pairs are disulfide-bonded: Cys-43–Cys-74, Cys-47–Cys-67, Cys-56–Cys-87, Cys-95–Cys-118, Cys-129–Cys-136, and Cys-138–Cys-158. The Thyroglobulin type-1 1 domain occupies 92–158; the sequence is QSKCRLERAQ…SSVQNKTPVC (67 aa). The span at 149-172 shows a compositional bias: polar residues; the sequence is SSVQNKTPVCSGSVTDKPLSQGNS. The disordered stretch occupies residues 149–191; that stretch reads SSVQNKTPVCSGSVTDKPLSQGNSGRKDDGSKPTPTMETQPVF. The N-linked (GlcNAc...) asparagine glycan is linked to Asn-214. Residues 224 to 292 enclose the Thyroglobulin type-1 2 domain; sequence VYSCDQERQS…TSTRYVMPSC (69 aa). Cystine bridges form between Cys-227/Cys-251, Cys-262/Cys-269, and Cys-271/Cys-292. 2 EF-hand domains span residues 359-394 and 396-431; these read LEERVVHWYFSQLDSNSSNDINKREMKPFKRYVKKK and KPKKCARRFTDYCDLNKDKVISLPELKGCLGVSKEG. Ca(2+) is bound by residues Asp-372, Asn-374, Ser-376, Asp-378, Glu-383, Asp-409, Asn-411, Asp-413, and Glu-420. An N-linked (GlcNAc...) asparagine glycan is attached at Asn-374.

Post-translationally, glycosylated. In terms of tissue distribution, widely expressed in many tissues with a strongest signal in ovary. No expression in spleen.

Its subcellular location is the secreted. It localises to the extracellular space. It is found in the extracellular matrix. The protein resides in the basement membrane. Its function is as follows. Plays essential roles in both eye and limb development. Probable regulator of osteoblast differentiation. In Homo sapiens (Human), this protein is SPARC-related modular calcium-binding protein 1 (SMOC1).